The primary structure comprises 444 residues: Porin AaxA (444 aa).

The N-terminal stretch at 1-19 is a signal peptide; the sequence is MAFSRFYLLTALYTGGILA. Residues 42-68 are disordered; the sequence is KNSTQDSDSSPSESSPHPRQEPRRHVL. Low complexity predominate over residues 46–56; sequence QDSDSSPSESS.

The protein belongs to the OprB family.

It is found in the cell outer membrane. Functionally, facilitates L-arginine uptake, as part of the AaxABC system. The arginine uptake by the bacterium in the macrophage may be a virulence factor against the host innate immune response. This chain is Porin AaxA (aaxA), found in Chlamydia felis (strain Fe/C-56) (Chlamydophila felis).